The primary structure comprises 390 residues: GTPase Obg (390 aa).

The Obg domain maps to 1–159; it reads MKFVDEASIL…RDLLLELMLL (159 aa). The segment at 127 to 147 is disordered; that stretch reads NTRFKSSVNRTPRQKTNGTPG. Over residues 129–145 the composition is skewed to polar residues; it reads RFKSSVNRTPRQKTNGT. The 174-residue stretch at 160–333 folds into the OBG-type G domain; it reads ADVGMLGMPN…LCWDVMTFII (174 aa). GTP contacts are provided by residues 166–173, 191–195, 213–216, 283–286, and 314–316; these read GMPNAGKS, FTTLV, DIPG, NKID, and SAA. Residues S173 and T193 each coordinate Mg(2+).

It belongs to the TRAFAC class OBG-HflX-like GTPase superfamily. OBG GTPase family. Monomer. Mg(2+) is required as a cofactor.

The protein localises to the cytoplasm. Functionally, an essential GTPase which binds GTP, GDP and possibly (p)ppGpp with moderate affinity, with high nucleotide exchange rates and a fairly low GTP hydrolysis rate. Plays a role in control of the cell cycle, stress response, ribosome biogenesis and in those bacteria that undergo differentiation, in morphogenesis control. The protein is GTPase Obg of Salmonella paratyphi A (strain ATCC 9150 / SARB42).